We begin with the raw amino-acid sequence, 101 residues long: Integration host factor subunit beta (101 aa).

This sequence belongs to the bacterial histone-like protein family. Heterodimer of an alpha and a beta chain.

This protein is one of the two subunits of integration host factor, a specific DNA-binding protein that functions in genetic recombination as well as in transcriptional and translational control. This chain is Integration host factor subunit beta, found in Rhodopseudomonas palustris (strain BisB5).